A 189-amino-acid polypeptide reads, in one-letter code: Interferon alpha-1 (189 aa).

The N-terminal stretch at 1 to 23 (MARLCAFLMVLAVLSYWPTCSLG) is a signal peptide. Disulfide bonds link C24–C122 and C52–C162. N101 carries an N-linked (GlcNAc...) asparagine glycan.

Belongs to the alpha/beta interferon family. In terms of assembly, interacts with CR2. In terms of processing, glycosylated.

The protein resides in the secreted. Functionally, produced by macrophages, IFN-alpha have antiviral activities. Interferon stimulates the production of two enzymes: a protein kinase and an oligoadenylate synthetase. The polypeptide is Interferon alpha-1 (Ifna1) (Mus musculus (Mouse)).